Reading from the N-terminus, the 134-residue chain is Small ribosomal subunit protein uS12 (134 aa).

A disordered region spans residues 1–27; sequence MPTIQQLVRKGRESFADKSKSPALNSC. Positions 10–20 are enriched in basic and acidic residues; sequence KGRESFADKSK. Asp89 is modified (3-methylthioaspartic acid). Positions 103 to 134 are disordered; the sequence is DTAGVNGRTQRRSKYGAKRPKPGQAPAAKGKK. The span at 111–123 shows a compositional bias: basic residues; the sequence is TQRRSKYGAKRPK. Residues 124–134 are compositionally biased toward low complexity; sequence PGQAPAAKGKK.

It belongs to the universal ribosomal protein uS12 family. Part of the 30S ribosomal subunit. Contacts proteins S8 and S17. May interact with IF1 in the 30S initiation complex.

Functionally, with S4 and S5 plays an important role in translational accuracy. In terms of biological role, interacts with and stabilizes bases of the 16S rRNA that are involved in tRNA selection in the A site and with the mRNA backbone. Located at the interface of the 30S and 50S subunits, it traverses the body of the 30S subunit contacting proteins on the other side and probably holding the rRNA structure together. The combined cluster of proteins S8, S12 and S17 appears to hold together the shoulder and platform of the 30S subunit. This Porphyromonas gingivalis (strain ATCC 33277 / DSM 20709 / CIP 103683 / JCM 12257 / NCTC 11834 / 2561) protein is Small ribosomal subunit protein uS12.